The chain runs to 210 residues: Small ribosomal subunit protein uS7 (210 aa).

This sequence belongs to the universal ribosomal protein uS7 family. In terms of assembly, component of the small ribosomal subunit. Part of the small subunit (SSU) processome, composed of more than 70 proteins and the RNA chaperone small nucleolar RNA (snoRNA) U3.

The protein localises to the cytoplasm. The protein resides in the nucleus. It localises to the nucleolus. Its function is as follows. Component of the small ribosomal subunit. The ribosome is a large ribonucleoprotein complex responsible for the synthesis of proteins in the cell. Part of the small subunit (SSU) processome, first precursor of the small eukaryotic ribosomal subunit. During the assembly of the SSU processome in the nucleolus, many ribosome biogenesis factors, an RNA chaperone and ribosomal proteins associate with the nascent pre-rRNA and work in concert to generate RNA folding, modifications, rearrangements and cleavage as well as targeted degradation of pre-ribosomal RNA by the RNA exosome. This chain is Small ribosomal subunit protein uS7 (rps-5), found in Caenorhabditis elegans.